The primary structure comprises 459 residues: ATP-dependent protease ATPase subunit HslU (459 aa).

Residues valine 21, 63–68 (GVGKTE), aspartate 273, glutamate 338, and arginine 410 each bind ATP.

This sequence belongs to the ClpX chaperone family. HslU subfamily. As to quaternary structure, a double ring-shaped homohexamer of HslV is capped on each side by a ring-shaped HslU homohexamer. The assembly of the HslU/HslV complex is dependent on binding of ATP.

It is found in the cytoplasm. In terms of biological role, ATPase subunit of a proteasome-like degradation complex; this subunit has chaperone activity. The binding of ATP and its subsequent hydrolysis by HslU are essential for unfolding of protein substrates subsequently hydrolyzed by HslV. HslU recognizes the N-terminal part of its protein substrates and unfolds these before they are guided to HslV for hydrolysis. In Thermosipho africanus (strain TCF52B), this protein is ATP-dependent protease ATPase subunit HslU.